The chain runs to 540 residues: Probable ATP-dependent RNA helicase DDX28 (540 aa).

The Mitochondrial targeting signal signature appears at 3-18 (LAGPSRLLALAVRLLL). The Q motif motif lies at 126 to 156 (GSFVDLGLEPRVLLALQEAVPEVVQPTSVQS). The region spanning 159–351 (IPPLLRGRHL…SKVTSPDSLT (193 aa)) is the Helicase ATP-binding domain. 172 to 179 (AETGSGKT) provides a ligand contact to ATP. Positions 180-191 (LSYLLPLFQRLL) match the Nuclear export signal motif. Residues 286–289 (DEVD) carry the DEAD motif. A Helicase C-terminal domain is found at 377 to 536 (KVTELVQILK…GLASSVGDPL (160 aa)). Residues 520 to 523 (RRRR) carry the Nuclear localization signal motif.

It belongs to the DEAD box helicase family. In terms of assembly, monomer. Found in a complex with GRSF1, DHX30, FASTKD2 and FASTKD5. Associates with the 16S mitochondrial rRNA (16S mt-rRNA) and with the mitochondrial ribosome large subunit (39S).

Its subcellular location is the nucleus. It localises to the mitochondrion. The protein resides in the mitochondrion matrix. It is found in the mitochondrion nucleoid. The enzyme catalyses ATP + H2O = ADP + phosphate + H(+). Its function is as follows. Plays an essential role in facilitating the proper assembly of the mitochondrial large ribosomal subunit and its helicase activity is essential for this function. May be involved in RNA processing or transport. Has RNA and Mg(2+)-dependent ATPase activity. This Mus musculus (Mouse) protein is Probable ATP-dependent RNA helicase DDX28 (Ddx28).